The primary structure comprises 512 residues: ETS translocation variant 3 (512 aa).

Positions 35–116 (IQLWHFILEL…KGKRFTYKFN (82 aa)) form a DNA-binding region, ETS. The disordered stretch occupies residues 138 to 196 (QSAPPVPTASSRFHFPPLDTHSPTSDVQPGRFSASSLTASGQESSNGTDRKAELSXLED). Phosphoserine is present on residues S139, S159, and S315. The segment covering 158-184 (HSPTSDVQPGRFSASSLTASGQESSNG) has biased composition (polar residues). The interval 341–512 (QFSIKLQPPP…QGLATAAADA (172 aa)) is disordered. The segment covering 380-406 (IKVEPASEKDAESLRQSAREKEEHTXE) has biased composition (basic and acidic residues). K381 is covalently cross-linked (Glycyl lysine isopeptide (Lys-Gly) (interchain with G-Cter in SUMO2)). Position 388 is an N6-acetyllysine; alternate (K388). Residue K388 forms a Glycyl lysine isopeptide (Lys-Gly) (interchain with G-Cter in SUMO2); alternate linkage. Positions 443–452 (EPLEVTEDIE) are enriched in acidic residues. Basic and acidic residues-rich tracts occupy residues 453 to 468 (DRPG…KEDA) and 479 to 491 (RWND…ELSK).

It belongs to the ETS family.

The protein localises to the nucleus. Transcriptional repressor that contribute to growth arrest during terminal macrophage differentiation by repressing target genes involved in Ras-dependent proliferation. Represses MMP1 promoter activity. The chain is ETS translocation variant 3 (ETV3) from Ateles geoffroyi (Black-handed spider monkey).